The following is a 437-amino-acid chain: O-antigen export system ATP-binding protein RfbB (437 aa).

In terms of domain architecture, ABC transporter spans 37 to 256; sequence LRGKRQSRDA…YREAISLAEA (220 aa). ATP is bound at residue 69–76; it reads GRNGSGKS.

It belongs to the ABC transporter superfamily.

The protein resides in the cell inner membrane. May form an ATP-driven O-antigen export apparatus, in association with RfbA. The protein is O-antigen export system ATP-binding protein RfbB (rfbB) of Myxococcus xanthus.